Consider the following 359-residue polypeptide: MQTLANLLNTIPAIDPAAMSRAQRHIDGLLKPVGSLGRLEALGVQLAGMPGLNGIPHVGKKAVLVMCADHGVWEEGVAISPKEVTAIQAENMTRGTTGVCVLAAQAGANVHVIDVGIDTAEPIPGLINMRVARGSGNIASAPAMSRRQAEKLLLDVICYTRELAKNGVTLFGVGELGMANTTPAAAIVSTITGRDPEEVVGIGANLPTDKLANKIDVVRRAITLNQPNPQDGVNVLAKVGGFDLVGMAGVMLGAASCGLPVLLDGFLSYAAALAACQMSPAIKPYLIPSHLSAEKGARIALSHLGLEPFLNMDMRLGEGSGAALAMPIIEAACAIYNNMGELAASKIVLPGNTTSDLNS.

Catalysis depends on Glu318, which acts as the Proton acceptor.

The protein belongs to the CobT family. As to quaternary structure, homodimer.

The enzyme catalyses 5,6-dimethylbenzimidazole + nicotinate beta-D-ribonucleotide = alpha-ribazole 5'-phosphate + nicotinate + H(+). It functions in the pathway nucleoside biosynthesis; alpha-ribazole biosynthesis; alpha-ribazole from 5,6-dimethylbenzimidazole: step 1/2. Catalyzes the synthesis of alpha-ribazole-5'-phosphate from nicotinate mononucleotide (NAMN) and 5,6-dimethylbenzimidazole (DMB). In Escherichia coli O157:H7, this protein is Nicotinate-nucleotide--dimethylbenzimidazole phosphoribosyltransferase.